Consider the following 480-residue polypeptide: Ribulose bisphosphate carboxylase large chain (480 aa).

Residues 1-2 (MS) constitute a propeptide that is removed on maturation. Residue Pro-3 is modified to N-acetylproline. N6,N6,N6-trimethyllysine is present on Lys-14. Asn-123 and Thr-173 together coordinate substrate. Residue Lys-175 is the Proton acceptor of the active site. Lys-177 provides a ligand contact to substrate. 3 residues coordinate Mg(2+): Lys-201, Asp-203, and Glu-204. An N6-carboxylysine modification is found at Lys-201. The active-site Proton acceptor is the His-294. Substrate is bound by residues Arg-295, His-327, and Ser-379.

Belongs to the RuBisCO large chain family. Type I subfamily. In terms of assembly, heterohexadecamer of 8 large chains and 8 small chains; disulfide-linked. The disulfide link is formed within the large subunit homodimers. It depends on Mg(2+) as a cofactor. In terms of processing, the disulfide bond which can form in the large chain dimeric partners within the hexadecamer appears to be associated with oxidative stress and protein turnover.

The protein resides in the plastid. The protein localises to the chloroplast. It carries out the reaction 2 (2R)-3-phosphoglycerate + 2 H(+) = D-ribulose 1,5-bisphosphate + CO2 + H2O. The enzyme catalyses D-ribulose 1,5-bisphosphate + O2 = 2-phosphoglycolate + (2R)-3-phosphoglycerate + 2 H(+). Functionally, ruBisCO catalyzes two reactions: the carboxylation of D-ribulose 1,5-bisphosphate, the primary event in carbon dioxide fixation, as well as the oxidative fragmentation of the pentose substrate in the photorespiration process. Both reactions occur simultaneously and in competition at the same active site. The polypeptide is Ribulose bisphosphate carboxylase large chain (Mollugo verticillata (Green carpetweed)).